The primary structure comprises 147 residues: DNA-directed RNA polymerase subunit 6 homolog (147 aa).

The protein belongs to the archaeal RpoK/eukaryotic RPB6 RNA polymerase subunit family. Part of the viral DNA-directed RNA polymerase that consists of 8 polII-like subunits (RPB1, RPB2, RPB3, RPB5, RPB6, RPB7, RPB9, RPB10), a capping enzyme and a termination factor.

It localises to the host cytoplasm. The protein resides in the virion. Functionally, component of the DNA-directed RNA polymerase (RNAP) that catalyzes the transcription in the cytoplasm of viral DNA into RNA using the four ribonucleoside triphosphates as substrates. In Ornithodoros (relapsing fever ticks), this protein is DNA-directed RNA polymerase subunit 6 homolog.